Consider the following 271-residue polypeptide: Shikimate dehydrogenase (NADP(+)) (271 aa).

Shikimate-binding positions include Ser-14–Ser-16 and Thr-61. The Proton acceptor role is filled by Lys-65. Shikimate is bound by residues Asn-86 and Asp-101. Residues Gly-125–Ala-129 and Ile-212 contribute to the NADP(+) site. A shikimate-binding site is contributed by Tyr-214. Gly-235 contacts NADP(+).

The protein belongs to the shikimate dehydrogenase family. In terms of assembly, homodimer.

It carries out the reaction shikimate + NADP(+) = 3-dehydroshikimate + NADPH + H(+). It participates in metabolic intermediate biosynthesis; chorismate biosynthesis; chorismate from D-erythrose 4-phosphate and phosphoenolpyruvate: step 4/7. Functionally, involved in the biosynthesis of the chorismate, which leads to the biosynthesis of aromatic amino acids. Catalyzes the reversible NADPH linked reduction of 3-dehydroshikimate (DHSA) to yield shikimate (SA). This chain is Shikimate dehydrogenase (NADP(+)), found in Clostridium perfringens (strain ATCC 13124 / DSM 756 / JCM 1290 / NCIMB 6125 / NCTC 8237 / Type A).